A 197-amino-acid polypeptide reads, in one-letter code: Large ribosomal subunit protein uL22 (197 aa).

The interval 118–197 is disordered; that stretch reads ESRPAKDQRS…ETSAAKGGSD (80 aa). Residues 149–165 show a composition bias toward low complexity; the sequence is APAKKAAAKAPAKKAPA. The span at 172 to 183 shows a compositional bias: basic residues; it reads TPAKKAPAKKAP. Over residues 184-197 the composition is skewed to low complexity; it reads AKASETSAAKGGSD.

This sequence belongs to the universal ribosomal protein uL22 family. As to quaternary structure, part of the 50S ribosomal subunit.

This protein binds specifically to 23S rRNA; its binding is stimulated by other ribosomal proteins, e.g. L4, L17, and L20. It is important during the early stages of 50S assembly. It makes multiple contacts with different domains of the 23S rRNA in the assembled 50S subunit and ribosome. In terms of biological role, the globular domain of the protein is located near the polypeptide exit tunnel on the outside of the subunit, while an extended beta-hairpin is found that lines the wall of the exit tunnel in the center of the 70S ribosome. The sequence is that of Large ribosomal subunit protein uL22 from Mycobacterium bovis (strain ATCC BAA-935 / AF2122/97).